The sequence spans 451 residues: Phosphoglucosamine mutase (451 aa).

Ser-102 acts as the Phosphoserine intermediate in catalysis. Residues Ser-102, Asp-243, Asp-245, and Asp-247 each coordinate Mg(2+). Phosphoserine is present on Ser-102.

It belongs to the phosphohexose mutase family. It depends on Mg(2+) as a cofactor. Activated by phosphorylation.

It catalyses the reaction alpha-D-glucosamine 1-phosphate = D-glucosamine 6-phosphate. Its function is as follows. Catalyzes the conversion of glucosamine-6-phosphate to glucosamine-1-phosphate. In Salinispora tropica (strain ATCC BAA-916 / DSM 44818 / JCM 13857 / NBRC 105044 / CNB-440), this protein is Phosphoglucosamine mutase.